The following is an 82-amino-acid chain: Large ribosomal subunit protein bL31B (82 aa).

It belongs to the bacterial ribosomal protein bL31 family. Type B subfamily. In terms of assembly, part of the 50S ribosomal subunit.

The chain is Large ribosomal subunit protein bL31B from Pectobacterium carotovorum subsp. carotovorum (strain PC1).